The following is a 522-amino-acid chain: MAVNKGLTLLDGDLPEQENVLQRVLQLPVVSGTCECFQKTYTSTKEAHPLVASVCNAYEKGVQSASSLAAWSMEPVVRRLSTQFTAANELACRGLDHLEEKIPALQYPPEKIASELKDTISTRLRSARNSISVPIASTSDKVLGAALAGCELAWGVARDTAEFAANTRAGRLASGGADLALGSIEKVVEYLLPPDKEESAPAPGHQQAQKSPKAKPSLLSRVGALTNTLSRYTVQTMARALEQGHTVAMWIPGVVPLSSLAQWGASVAMQAVSRRRSEVRVPWLHSLAAAQEEDHEDQTDTEGEDTEEEEELETEENKFSEVAALPGPRGLLGGVAHTLQKTLQTTISAVTWAPAAVLGMAGRVLHLTPAPAVSSTKGRAMSLSDALKGVTDNVVDTVVHYVPLPRLSLMEPESEFRDIDNPPAEVERREAERRASGAPSAGPEPAPRLAQPRRSLRSAQSPGAPPGPGLEDEVATPAAPRPGFPAVPREKPKRRVSDSFFRPSVMEPILGRTHYSQLRKKS.

Position 81 is a phosphoserine (S81). T85 bears the Phosphothreonine mark. S126, S130, S132, S137, and S174 each carry phosphoserine. Disordered stretches follow at residues 195-217 (DKEE…AKPS) and 287-318 (LAAA…EENK). A compositionally biased stretch (acidic residues) spans 291 to 314 (QEEDHEDQTDTEGEDTEEEEELET). A required for interaction with CIDEC region spans residues 291–319 (QEEDHEDQTDTEGEDTEEEEELETEENKF). T299 and T301 each carry phosphothreonine. A phosphoserine mark is found at S382, S384, and S408. Residues 413-522 (ESEFRDIDNP…THYSQLRKKS (110 aa)) form a disordered region. Positions 414-435 (SEFRDIDNPPAEVERREAERRA) are enriched in basic and acidic residues. Phosphoserine occurs at positions 436, 497, and 499.

This sequence belongs to the perilipin family. Interacts with ABHD5. Interacts with CIDEC. Interacts with AQP7. Major cAMP-dependent protein kinase-substrate in adipocytes, also dephosphorylated by PP1. When phosphorylated, may be maximally sensitive to HSL and when unphosphorylated, may play a role in the inhibition of lipolysis, by acting as a barrier in lipid droplet. As to expression, detected in adipocytes from white adipose tissue (at protein level). Detected in visceral adipose tissue and mammary gland.

It localises to the endoplasmic reticulum. It is found in the lipid droplet. Functionally, modulator of adipocyte lipid metabolism. Coats lipid storage droplets to protect them from breakdown by hormone-sensitive lipase (HSL). Its absence may result in leanness. Plays a role in unilocular lipid droplet formation by activating CIDEC. Their interaction promotes lipid droplet enlargement and directional net neutral lipid transfer. May modulate lipolysis and triglyceride levels. In Homo sapiens (Human), this protein is Perilipin-1 (PLIN1).